Reading from the N-terminus, the 296-residue chain is Malate--CoA ligase subunit alpha (296 aa).

CoA-binding positions include Thr17–Lys20, Lys43, and Ile96–Asp98. His251 serves as the catalytic Tele-phosphohistidine intermediate.

This sequence belongs to the succinate/malate CoA ligase alpha subunit family. Heterotetramer of two alpha and two beta subunits.

It carries out the reaction (S)-malate + ATP + CoA = (S)-malyl-CoA + ADP + phosphate. It participates in one-carbon metabolism; formaldehyde assimilation via serine pathway. In Methylorubrum extorquens (strain ATCC 14718 / DSM 1338 / JCM 2805 / NCIMB 9133 / AM1) (Methylobacterium extorquens), this protein is Malate--CoA ligase subunit alpha (mtkB).